Consider the following 263-residue polypeptide: Receptor-transporting protein 1 (263 aa).

The Cytoplasmic segment spans residues Met-1–Ser-238. Residues Ala-88–Gly-197 form a 3CxxC-type zinc finger. The helical transmembrane segment at Ile-239 to Phe-259 threads the bilayer. The Extracellular segment spans residues Arg-260 to Val-263.

The protein belongs to the TMEM7 family. In terms of assembly, interacts with olfactory receptors. Predominantly expressed in olfactory and vomeronasal organs, in mature olfactory sensory neurons.

Its subcellular location is the cell membrane. In terms of biological role, specifically promotes functional cell surface expression of olfactory receptors, but not of other GPCRs. This chain is Receptor-transporting protein 1 (Rtp1), found in Mus musculus (Mouse).